We begin with the raw amino-acid sequence, 316 residues long: ATP synthase gamma chain (316 aa).

It belongs to the ATPase gamma chain family. F-type ATPases have 2 components, CF(1) - the catalytic core - and CF(0) - the membrane proton channel. CF(1) has five subunits: alpha(3), beta(3), gamma(1), delta(1), epsilon(1). CF(0) has three main subunits: a, b and c.

It localises to the cellular thylakoid membrane. Its function is as follows. Produces ATP from ADP in the presence of a proton gradient across the membrane. The gamma chain is believed to be important in regulating ATPase activity and the flow of protons through the CF(0) complex. This chain is ATP synthase gamma chain, found in Prochlorococcus marinus subsp. pastoris (strain CCMP1986 / NIES-2087 / MED4).